The chain runs to 829 residues: MHYDFKKVEQDIQGKWNFYTDAKQAQCYVLEMFPYPSGNIHMGHLRNYTIGDVIARYKRACGINVFHPIGWDAFGLPAENAALSYNINPHTWTESNIDNMRCQLKSIGLSYDWDKELATCDPSYYKHEQAFFLDFLKCGLAYRKESLVNWDPVDQTVLANEQVIDGRGWRSGAVVEKRKLFQWFLKITDFAEELLNDLQILDQWPEKVKLMQEKWIGKSQGVVIDFEILGINKTLQVFTTCPHTLFGAAFIAVSFDHPILQYVNDSKVIQLINDFDRKNLISDVSSTIEKFGIDSGLVVKHPLLNVNLPVYIVNFVLMDYATGAIFGCPAHDQRDFEFAKKYSLPVKQVVFPEVDVNLDKEAYVGSGIMKHSDFLDGMTVDEAKKAIVAKLTFLGVCKEITYYRMHDWGISRQRYWGCPIPIIYCKKCGTVPVDKKDLPVTLPKDVDFTKYGNPLDNHPTWKYVKCPSCGMDAERETDTFDTFFESSWYFAAFCGTSNGINKDVCNMLLPVNYYVGGVEHAVLHLLYSRFFCRALTKCGYFNIKEPFSNLITQGMVCHSTYSDEQGNYLFPEEAKKMMENGQHVTVGRAEKMSKSKKNVVNLEYIIDKYGADTARLFILSDTPPERDIEWLDDGIEGASRYLSKLWRVIISYDKFNLNFNKENIIGDDVKYRRSVHKILSGITNDLDFCRLNCAVAKFRELSNIISEMIRTSVNCYVVSEAIYILIRVIEPFIPHIAEKLWENIGGKGMLWNQVWPKADSELLVERNVTIVVQVNGKFVKALTVANDIDDDQLKSMALEIAKNRIGGNVVKDIYVIPKRVINIVAVKPS.

Positions 34–44 (PYPSGNIHMGH) match the 'HIGH' region motif. A 'KMSKS' region motif is present at residues 591-595 (KMSKS). Lys594 provides a ligand contact to ATP.

It belongs to the class-I aminoacyl-tRNA synthetase family.

It is found in the cytoplasm. It carries out the reaction tRNA(Leu) + L-leucine + ATP = L-leucyl-tRNA(Leu) + AMP + diphosphate. The protein is Leucine--tRNA ligase of Ehrlichia chaffeensis (strain ATCC CRL-10679 / Arkansas).